The sequence spans 91 residues: Large ribosomal subunit protein bL27 (91 aa).

Residues M1–R25 are disordered.

The protein belongs to the bacterial ribosomal protein bL27 family.

This Corynebacterium kroppenstedtii (strain DSM 44385 / JCM 11950 / CIP 105744 / CCUG 35717) protein is Large ribosomal subunit protein bL27.